A 209-amino-acid chain; its full sequence is Large ribosomal subunit protein bL25 (209 aa).

The disordered stretch occupies residues G190–E209. Residues D196–E209 are compositionally biased toward acidic residues.

The protein belongs to the bacterial ribosomal protein bL25 family. CTC subfamily. As to quaternary structure, part of the 50S ribosomal subunit; part of the 5S rRNA/L5/L18/L25 subcomplex. Contacts the 5S rRNA. Binds to the 5S rRNA independently of L5 and L18.

In terms of biological role, this is one of the proteins that binds to the 5S RNA in the ribosome where it forms part of the central protuberance. The polypeptide is Large ribosomal subunit protein bL25 (Ruegeria sp. (strain TM1040) (Silicibacter sp.)).